Here is a 241-residue protein sequence, read N- to C-terminus: Probable transcriptional regulatory protein Mpe_A1337 (241 aa).

Positions 1–20 (MAGHSKWANIQHRKGRQDEK) are disordered.

It belongs to the TACO1 family.

The protein localises to the cytoplasm. This chain is Probable transcriptional regulatory protein Mpe_A1337, found in Methylibium petroleiphilum (strain ATCC BAA-1232 / LMG 22953 / PM1).